Consider the following 246-residue polypeptide: 4-hydroxy-tetrahydrodipicolinate reductase (246 aa).

7–12 (GCSGRM) provides a ligand contact to NAD(+). Arg34 contributes to the NADP(+) binding site. Residues 76–78 (ATT) and 102–105 (CPNT) contribute to the NAD(+) site. Residue His135 is the Proton donor/acceptor of the active site. Residue His136 coordinates (S)-2,3,4,5-tetrahydrodipicolinate. The active-site Proton donor is the Lys139. Residue 145–146 (GT) participates in (S)-2,3,4,5-tetrahydrodipicolinate binding.

This sequence belongs to the DapB family.

Its subcellular location is the cytoplasm. It carries out the reaction (S)-2,3,4,5-tetrahydrodipicolinate + NAD(+) + H2O = (2S,4S)-4-hydroxy-2,3,4,5-tetrahydrodipicolinate + NADH + H(+). The catalysed reaction is (S)-2,3,4,5-tetrahydrodipicolinate + NADP(+) + H2O = (2S,4S)-4-hydroxy-2,3,4,5-tetrahydrodipicolinate + NADPH + H(+). It functions in the pathway amino-acid biosynthesis; L-lysine biosynthesis via DAP pathway; (S)-tetrahydrodipicolinate from L-aspartate: step 4/4. Catalyzes the conversion of 4-hydroxy-tetrahydrodipicolinate (HTPA) to tetrahydrodipicolinate. The chain is 4-hydroxy-tetrahydrodipicolinate reductase from Chlamydia abortus (strain DSM 27085 / S26/3) (Chlamydophila abortus).